Reading from the N-terminus, the 647-residue chain is Threonine--tRNA ligase (647 aa).

The region spanning 1 to 61 (MIKITFPDGA…EEDGSIEIVT (61 aa)) is the TGS domain. The catalytic stretch occupies residues 240 to 538 (DHRKLGKELD…LIETYKGAFP (299 aa)). Zn(2+)-binding residues include cysteine 334, histidine 385, and histidine 515.

It belongs to the class-II aminoacyl-tRNA synthetase family. Homodimer. Requires Zn(2+) as cofactor.

Its subcellular location is the cytoplasm. The enzyme catalyses tRNA(Thr) + L-threonine + ATP = L-threonyl-tRNA(Thr) + AMP + diphosphate + H(+). Its function is as follows. Catalyzes the attachment of threonine to tRNA(Thr) in a two-step reaction: L-threonine is first activated by ATP to form Thr-AMP and then transferred to the acceptor end of tRNA(Thr). Also edits incorrectly charged L-seryl-tRNA(Thr). The chain is Threonine--tRNA ligase from Streptococcus pyogenes serotype M18 (strain MGAS8232).